A 54-amino-acid chain; its full sequence is UPF0391 membrane protein Aave_3864 (54 aa).

2 consecutive transmembrane segments (helical) span residues 5–25 (AVVFLVIALIAALFGFGGIAA) and 28–48 (VGIAKILFFVFVIMAVVTFVL).

It belongs to the UPF0391 family.

The protein localises to the cell membrane. The protein is UPF0391 membrane protein Aave_3864 of Paracidovorax citrulli (strain AAC00-1) (Acidovorax citrulli).